We begin with the raw amino-acid sequence, 401 residues long: MSEQQTASLGEFTFECGESIPDLELAYETYGEFTGDNAVLVCHALTGSAHVAGGRRRSDTSGQAHAWWDDIVGPGKAVDTTDYYVICANIPGSCYGSSGPPSTNPETGEPWGTTFPAVTVGDWTRAQRRLLDHLGVPHLHAVVGGSVGGMNVLDWAKRHPDHVNRVAVVAAAARLDPQCLALDAIARRAITTDPNWNGGDYYGEDPPVEGLALARQIGHVMYLSKSSMQDKFGRRSSGIDAGRDSFEMDPAAGFFPYREVESYLDYQGEKFARRFDANSYLYLTRAMDNYDLASGYESDRDALAAFDGEALLISFTGDWHFTVEQSEAVADAFRESGTDTAHHVVDSDHGHDAFLVEPDRVGPPLDDFLVDGVAGKAVSDTTPDDDDGDEFAPVHTSLFSD.

The 322-residue stretch at 37–358 (NAVLVCHALT…HGHDAFLVEP (322 aa)) folds into the AB hydrolase-1 domain. Ser146 serves as the catalytic Nucleophile. Arg215 contacts substrate. Active-site residues include Asp318 and His351. Asp352 provides a ligand contact to substrate.

This sequence belongs to the AB hydrolase superfamily. MetX family. As to quaternary structure, homodimer.

The protein localises to the cytoplasm. It catalyses the reaction L-homoserine + acetyl-CoA = O-acetyl-L-homoserine + CoA. The protein operates within amino-acid biosynthesis; L-methionine biosynthesis via de novo pathway; O-acetyl-L-homoserine from L-homoserine: step 1/1. Its function is as follows. Transfers an acetyl group from acetyl-CoA to L-homoserine, forming acetyl-L-homoserine. The protein is Homoserine O-acetyltransferase of Natronomonas pharaonis (strain ATCC 35678 / DSM 2160 / CIP 103997 / JCM 8858 / NBRC 14720 / NCIMB 2260 / Gabara) (Halobacterium pharaonis).